We begin with the raw amino-acid sequence, 645 residues long: Sodium/potassium/calcium exchanger 3 (645 aa).

A signal peptide spans 1–43; sequence MPPPGDQDCARRRSRRRRRDLLLSQLCFLASVALLLWSLSSLR. The Extracellular portion of the chain corresponds to 44–106; sequence EQKELDLMDL…DIFSNEDRRQ (63 aa). Asparagine 70 and asparagine 85 each carry an N-linked (GlcNAc...) asparagine glycan. The chain crosses the membrane as a helical span at residues 107 to 127; the sequence is GAVVLHVLCAMYMFYALAIVC. Topologically, residues 128–151 are cytoplasmic; sequence DDFFVPSLEKICERLHLSEDVAGA. One copy of the Alpha-1 repeat lies at 148–188; sequence VAGATFMAAGSSAPELFTSVIGVFITKGDVGVGTIVGSAVF. A helical membrane pass occupies residues 152–172; that stretch reads TFMAAGSSAPELFTSVIGVFI. At 173–181 the chain is on the extracellular side; it reads TKGDVGVGT. Residues 182 to 202 traverse the membrane as a helical segment; the sequence is IVGSAVFNILCIIGVCGLFAG. At 203-209 the chain is on the cytoplasmic side; the sequence is QVVALSS. The helical transmembrane segment at 210-230 threads the bilayer; the sequence is WCLLRDSIYYTLSVVALIVFI. The Extracellular portion of the chain corresponds to 231-234; the sequence is YDEK. Residues 235–255 traverse the membrane as a helical segment; that stretch reads VSWWESLVLVLMYLIYIVIMK. Topologically, residues 256–486 are cytoplasmic; it reads YNACIHQCFE…WFMVTFASST (231 aa). Serine 307 carries the phosphoserine modification. Disordered stretches follow at residues 379–398 and 404–442; these read TVEN…NGTR and AETD…PFDP. The segment covering 404–435 has biased composition (acidic residues); that stretch reads AETDNETENENEDNENNENDEEEEEDEDDDEG. A helical transmembrane segment spans residues 487–507; the sequence is LWIAAFSYMMVWMVTIIGYTL. Topologically, residues 508–512 are extracellular; the sequence is GIPDV. Residues 513–533 form a helical membrane-spanning segment; it reads IMGITFLAAGTSVPDCMASLI. Residues 520–551 form an Alpha-2 repeat; that stretch reads AAGTSVPDCMASLIVARQGMGDMAVSNSIGSN. Residues 534–551 lie on the Cytoplasmic side of the membrane; that stretch reads VARQGMGDMAVSNSIGSN. A helical transmembrane segment spans residues 552–572; it reads VFDILIGLGLPWALQTLAVDY. Over 573 to 582 the chain is Extracellular; sequence GSYIRLNSRG. The helical transmembrane segment at 583-603 threads the bilayer; it reads LIYSVGLLLASVFVTVFGVHL. At 604-617 the chain is on the cytoplasmic side; that stretch reads NKWQLDKKLGCGCL. The helical transmembrane segment at 618–638 threads the bilayer; it reads FLYGVFLCFSIMTEFNVFTFV. Residues 639 to 645 lie on the Extracellular side of the membrane; the sequence is NLPMCGD.

The protein belongs to the Ca(2+):cation antiporter (CaCA) (TC 2.A.19) family. SLC24A subfamily. As to expression, abundant in the brain. Highest levels found in selected thalamic nuclei, hippocampal CA1 neurons and in layer IV of the cerebral cortex. Expressed in dental tissues.

The protein resides in the cell membrane. The enzyme catalyses Ca(2+)(out) + K(+)(out) + 4 Na(+)(in) = Ca(2+)(in) + K(+)(in) + 4 Na(+)(out). Calcium, potassium:sodium antiporter that transports 1 Ca(2+) and 1 K(+) in exchange for 4 Na(+). The sequence is that of Sodium/potassium/calcium exchanger 3 (Slc24a3) from Mus musculus (Mouse).